The primary structure comprises 444 residues: Tubulin beta-9 chain (444 aa).

Positions 11, 69, 138, 142, 143, 144, 204, and 226 each coordinate GTP. Residue Glu-69 participates in Mg(2+) binding.

It belongs to the tubulin family. As to quaternary structure, dimer of alpha and beta chains. A typical microtubule is a hollow water-filled tube with an outer diameter of 25 nm and an inner diameter of 15 nM. Alpha-beta heterodimers associate head-to-tail to form protofilaments running lengthwise along the microtubule wall with the beta-tubulin subunit facing the microtubule plus end conferring a structural polarity. Microtubules usually have 13 protofilaments but different protofilament numbers can be found in some organisms and specialized cells. Interacts with TFCA. Requires Mg(2+) as cofactor.

The protein localises to the cytoplasm. The protein resides in the cytoskeleton. Functionally, tubulin is the major constituent of microtubules, a cylinder consisting of laterally associated linear protofilaments composed of alpha- and beta-tubulin heterodimers. Microtubules grow by the addition of GTP-tubulin dimers to the microtubule end, where a stabilizing cap forms. Below the cap, tubulin dimers are in GDP-bound state, owing to GTPase activity of alpha-tubulin. In Arabidopsis thaliana (Mouse-ear cress), this protein is Tubulin beta-9 chain (TUBB9).